The following is a 125-amino-acid chain: Ino eighty subunit 5 (125 aa).

A Phosphothreonine modification is found at Thr124.

In terms of assembly, component of the chromatin-remodeling INO80 complex, at least composed of ARP4, ARP5, ARP8, RVB1, RVB2, TAF14, NHP10, IES1, IES3, IES4, IES6, ACT1, IES2, IES5 and INO80.

Its subcellular location is the nucleus. The protein is Ino eighty subunit 5 (IES5) of Saccharomyces cerevisiae (strain ATCC 204508 / S288c) (Baker's yeast).